A 143-amino-acid chain; its full sequence is Large ribosomal subunit protein uL11 (143 aa).

It belongs to the universal ribosomal protein uL11 family. As to quaternary structure, part of the ribosomal stalk of the 50S ribosomal subunit. Interacts with L10 and the large rRNA to form the base of the stalk. L10 forms an elongated spine to which L12 dimers bind in a sequential fashion forming a multimeric L10(L12)X complex. Post-translationally, one or more lysine residues are methylated.

Forms part of the ribosomal stalk which helps the ribosome interact with GTP-bound translation factors. This is Large ribosomal subunit protein uL11 from Zymomonas mobilis subsp. mobilis (strain ATCC 31821 / ZM4 / CP4).